Consider the following 563-residue polypeptide: Dicarboxylate transporter 2.1, chloroplastic (563 aa).

A chloroplast-targeting transit peptide spans 1–68 (MESFALHSLS…LKPIPRFSTR (68 aa)). 2 disordered regions span residues 16 to 45 (TLLS…STIS) and 71 to 92 (AAPQ…PSPQ). A compositionally biased stretch (low complexity) spans 28-45 (RLSLLRRTSSRSPPSTIS). Pro residues predominate over residues 76–90 (NAPPPPPPSPSPSPS). The next 12 helical transmembrane spans lie at 96-116 (LIPL…VPVP), 134-154 (IAGL…GLTA), 165-185 (AAFS…FFFA), 234-254 (AGGI…SKPN), 261-281 (LGSY…ALFL), 308-328 (WFKA…LILY), 358-378 (NEWI…CGET), 379-399 (LGIP…VLGV), 414-434 (TLAW…LGVV), 450-470 (LSWP…HYLF), 483-503 (AFLA…LALA), and 537-557 (IGFV…TFWW).

It belongs to the SLC13A/DASS transporter (TC 2.A.47) family. DIT1 subfamily. As to expression, expressed in roots, rosette and cauline leaves, stems, flowers and siliques.

The protein localises to the plastid. The protein resides in the chloroplast inner membrane. Its function is as follows. Glutamate/malate translocator involved with DIT1 in primary ammonia assimilation and in the re-assimilation of ammonia generated by the photorespiratory pathway. Exports the end product of ammonia assimilation, glutamate, from plastids to the cytosol. The precursor for ammonia assimilation, 2-oxoglutarate, is imported from the cytosol by DIT1. The polypeptide is Dicarboxylate transporter 2.1, chloroplastic (DIT2-1) (Arabidopsis thaliana (Mouse-ear cress)).